Here is a 358-residue protein sequence, read N- to C-terminus: Methylthioribose-1-phosphate isomerase (358 aa).

Residues 54–56 (RGA), Arg96, and Gln205 contribute to the substrate site. The active-site Proton donor is Asp246. 256–257 (NK) is a binding site for substrate.

The protein belongs to the eIF-2B alpha/beta/delta subunits family. MtnA subfamily.

It catalyses the reaction 5-(methylsulfanyl)-alpha-D-ribose 1-phosphate = 5-(methylsulfanyl)-D-ribulose 1-phosphate. It participates in amino-acid biosynthesis; L-methionine biosynthesis via salvage pathway; L-methionine from S-methyl-5-thio-alpha-D-ribose 1-phosphate: step 1/6. Catalyzes the interconversion of methylthioribose-1-phosphate (MTR-1-P) into methylthioribulose-1-phosphate (MTRu-1-P). The protein is Methylthioribose-1-phosphate isomerase of Pseudomonas fluorescens (strain Pf0-1).